The primary structure comprises 2136 residues: Methylcytosine dioxygenase TET1 (2136 aa).

Basic residues-rich tracts occupy residues 1–12 (MSRSRHARPSRL) and 20–31 (KKKKNSQLRKTT). A disordered region spans residues 1-47 (MSRSRHARPSRLVRKEDVNKKKKNSQLRKTTKGANKNVASVKTLSPG). The span at 32 to 43 (KGANKNVASVKT) shows a compositional bias: polar residues. Residues 528–674 (LGIAQLSQAG…NGPKSESMDY (147 aa)) form a sufficient for binding to genomic CpG islands region. A CXXC-type zinc finger spans residues 584–625 (EKKKRKRCGVCEPCQQKTNCGECTYCKNRKNSHQICKKRKCE). 8 residues coordinate Zn(2+): Cys591, Cys594, Cys597, Cys603, Cys606, Cys609, Cys619, and Cys624. 3 stretches are compositionally biased toward basic and acidic residues: residues 712 to 724 (QNKKSQLTDHVKG), 732 to 743 (EAEKSKNSEVDK), and 849 to 869 (IHNEGDQPKTPENIPSKEPKD). Disordered regions lie at residues 712-746 (QNKKSQLTDHVKGDFSANVPEAEKSKNSEVDKKRT), 849-876 (IHNEGDQPKTPENIPSKEPKDGSPVQPS), 899-923 (QLSEAPSENSSPSKSEKDEESEQRT), and 1119-1169 (EKGT…VSYQ). Ser871 is subject to Phosphoserine. Positions 901–911 (SEAPSENSSPS) are enriched in low complexity. The segment covering 1119 to 1139 (EKGTIQQKPPSSVHNNHGSSL) has biased composition (polar residues). Positions 1146–1163 (TQKKTKSTPSRDRRKKKP) are enriched in basic residues. Zn(2+) contacts are provided by Cys1422, Cys1424, Cys1482, His1508, and Cys1510. Position 1551 (Arg1551) interacts with 2-oxoglutarate. The Zn(2+) site is built by Cys1561, Cys1563, Cys1579, and Cys1588. Positions 1580–1593 (SWSMYFNGCKFGRS) are interaction with DNA. Lys1589 participates in a covalent cross-link: Glycyl lysine isopeptide (Lys-Gly) (interchain with G-Cter in ubiquitin). A Zn(2+)-binding site is contributed by Cys1648. 2-oxoglutarate is bound at residue Cys1664. A Zn(2+)-binding site is contributed by His1670. 2 residues coordinate Fe cation: His1672 and Asp1674. Asn1677 contacts substrate. His1706 is a binding site for 2-oxoglutarate. Disordered regions lie at residues 1774–1897 (EKKP…AAAD) and 1919–1984 (EPLI…SPAE). Over residues 1786-1800 (NSTTTNNSKPSSLPT) the composition is skewed to low complexity. Composition is skewed to polar residues over residues 1824–1833 (SSDNTKTYSL) and 1937–1953 (HQPNHQPSFLTSPQDLA). A compositionally biased stretch (acidic residues) spans 1957-1976 (MEEDEQHSEADEPPSDEPLS). A Fe cation-binding site is contributed by His2028. 2043–2045 (RLS) contributes to the 2-oxoglutarate binding site. 2049 to 2051 (YQH) is a binding site for substrate. His2059 contributes to the Zn(2+) binding site. Basic and acidic residues predominate over residues 2074–2087 (KNKKMKASEQKDQA). The disordered stretch occupies residues 2074 to 2100 (KNKKMKASEQKDQAANEGPEQSSEVNE).

The protein belongs to the TET family. In terms of assembly, interacts with SIN3A; recruits the transcriptional corepressor SIN3A to gene promoters. Interacts with HCFC1. Interacts (via C-terminus) with OGT. Found in a complex composed of at least SINHCAF, SIN3A, HDAC1, SAP30, RBBP4, OGT and TET1. Interacts with QSER1. Interacts with NONO (via DNA-binding domain); this interaction recruits TET1 to genomic loci. Interacts with FOXA2; this interaction may recruit TET1 to specific enhancers to preserve their unmethylated status and hence allowing gene expression. Interacts with RNF2. Directly interacts (via C-terminus) with the DCAF1 component of the CRL4(VprBP) E3 ubiquitin-protein ligase complex. Interacts with UHRF1; this interaction induces the recruitment of TET1 to replicating heterochromatin. Interacts with DCAF1. The cofactor is Fe(2+). Zn(2+) is required as a cofactor. Glycosylated. Interaction with OGT leads to GlcNAcylation. Post-translationally, monoubiquitinated at Lys-1589 by the DCX (DDB1-CUL4-X-box) E3 ubiquitin-protein ligase complex called CRL4(VprBP) or CUL4A-RBX1-DDB1-DCAF1/VPRBP complex; this modification promotes binding to DNA. In terms of tissue distribution, expressed in fetal heart, lung and brain, and in adult skeletal muscle, thymus and ovary. Not detected in adult heart, lung or brain. Up-regulated in glioblastoma cells (at protein level). Expressed in embryonic stem cells (at protein level).

Its subcellular location is the nucleus. It localises to the chromosome. It catalyses the reaction a 5-methyl-2'-deoxycytidine in DNA + 2-oxoglutarate + O2 = a 5-hydroxymethyl-2'-deoxycytidine in DNA + succinate + CO2. It carries out the reaction a 5-hydroxymethyl-2'-deoxycytidine in DNA + 2-oxoglutarate + O2 = a 5-formyl-2'-deoxycytidine in DNA + succinate + CO2 + H2O. The enzyme catalyses a 5-formyl-2'-deoxycytidine in DNA + 2-oxoglutarate + O2 = a 5-carboxyl-2'-deoxycytidine in DNA + succinate + CO2 + H(+). Dioxygenase that plays a key role in active DNA demethylation, by catalyzing the sequential oxidation of the modified genomic base 5-methylcytosine (5mC) into 5-hydroxymethylcytosine (5hmC), 5-formylcytosine (5fC), and 5-carboxylcytosine (5caC). In addition to its role in DNA demethylation, plays a more general role in chromatin regulation by recruiting histone modifying protein complexes to alter histone marks and chromatin accessibility, leading to both activation and repression of gene expression. Plays therefore a role in many biological processes, including stem cell maintenance, T- and B-cell development, inflammation regulation, genomic imprinting, neural activity or DNA repair. Involved in the balance between pluripotency and lineage commitment of cells and plays a role in embryonic stem cells maintenance and inner cell mass cell specification. Together with QSER1, plays an essential role in the protection and maintenance of transcriptional and developmental programs to inhibit the binding of DNMT3A/3B and therefore de novo methylation. May play a role in pancreatic beta-cell specification during development. In this context, may function as an upstream epigenetic regulator of PAX4 presumably through direct recruitment by FOXA2 to a PAX4 enhancer to preserve its unmethylated status, thereby potentiating PAX4 expression to adopt beta-cell fate during endocrine lineage commitment. Under DNA hypomethylation conditions, such as in female meiotic germ cells, may induce epigenetic reprogramming of pericentromeric heterochromatin (PCH), the constitutive heterochromatin of pericentromeric regions. PCH forms chromocenters in the interphase nucleus and chromocenters cluster at the prophase of meiosis. In this context, may also be essential for chromocenter clustering in a catalytic activity-independent manner, possibly through the recruitment polycomb repressive complex 1 (PRC1) to the chromocenters. During embryonic development, may be required for normal meiotic progression in oocytes and meiotic gene activation. Binds preferentially to DNA containing cytidine-phosphate-guanosine (CpG) dinucleotides over CpH (H=A, T, and C), hemimethylated-CpG and hemimethylated-hydroxymethyl-CpG. Functionally, dioxygenase that plays a key role in active DNA demethylation. Binds to promoters, particularly to those with high CG content. In hippocampal neurons, isoform 1 regulates the expression of a unique subset of genes compared to isoform 2, although some overlap exists between both isoforms, hence differentially regulates excitatory synaptic transmission. In hippocampal neuron cell cultures, isoform 1 controls both miniature excitatory postsynaptic current amplitude and frequency. Isoform 1 may regulate genes involved in hippocampal-dependent memory, leading to positive regulation of memory, contrary to isoform 2 that may decrease memory. In terms of biological role, dioxygenase that plays a key role in active DNA demethylation. As isoform 1, binds to promoters, particularly to those with high CG content, however displays reduced global chromatin affinity compared with isoform 1, leading to decreased global DNA demethylation compared with isoform 1. Contrary to isoform 1, isoform 2 localizes during S phase to sites of ongoing DNA replication in heterochromatin, causing a significant de novo 5hmC formation, globally, and more so in heterochromatin, including LINE 1 interspersed DNA repeats leading to their activation. In hippocampal neurons, isoform 2 regulates the expression of a unique subset of genes compared to isoform 1, although some overlap between both isoforms, hence differentially regulates excitatory synaptic transmission. In hippocampal neuron cell cultures, isoform 2 controls miniature excitatory postsynaptic current frequency, but not amplitude. Isoform 2 may regulate genes involved in hippocampal-dependent memory, leading to negative regulation of memory, contrary to isoform 1 that may improve memory. In immature and partially differentiated gonadotrope cells, directly represses luteinizing hormone gene LHB expression and does not catalyze 5hmC at the gene promoter. The protein is Methylcytosine dioxygenase TET1 of Homo sapiens (Human).